We begin with the raw amino-acid sequence, 244 residues long: Venom nerve growth factor 3 (244 aa).

Residues 1 to 18 (MSMLCYTLIIAFLIGIWA) form the signal peptide. The propeptide occupies 19-125 (APKSEDNVPL…TLNRNIRAKR (107 aa)). A compositionally biased stretch (basic and acidic residues) spans 47–66 (GLKTSRNTDQRHPAPKKAED). Residues 47–67 (GLKTSRNTDQRHPAPKKAEDQ) form a disordered region. 3 disulfides stabilise this stretch: cysteine 139–cysteine 205, cysteine 181–cysteine 233, and cysteine 193–cysteine 235.

Belongs to the NGF-beta family. In terms of assembly, homodimer; non-covalently linked. Expressed by the venom gland.

It localises to the secreted. In terms of biological role, nerve growth factor is important for the development and maintenance of the sympathetic and sensory nervous systems. It stimulates division and differentiation of sympathetic and embryonic sensory neurons as well as basal forebrain cholinergic neurons in the brain. Its relevance in the snake venom is not clear. However, it has been shown to inhibit metalloproteinase-dependent proteolysis of platelet glycoprotein Ib alpha, suggesting a metalloproteinase inhibition to prevent metalloprotease autodigestion and/or protection against prey proteases. Binds a lipid between the two protein chains in the homodimer. The lipid-bound form promotes histamine relase from mouse mast cells, contrary to the lipid-free form. In Notechis scutatus scutatus (Mainland tiger snake), this protein is Venom nerve growth factor 3.